The following is a 1969-amino-acid chain: Hybrid signal transduction histidine kinase B (1969 aa).

Residues 1-10 (MEKSEQTNSF) show a composition bias toward polar residues. Disordered stretches follow at residues 1–91 (MEKS…HETK), 218–335 (KINE…KTKQ), 412–436 (QQQQQHHRHYHHHINSGGSSGSSDK), 468–505 (NNINIQAPSTPVQSRNYPLFTTQSPKNANSASKSKNKL), and 551–598 (GSGG…YNNN). Low complexity predominate over residues 11–55 (ESSNNNNNNIDSNINNNLENNNNKNNNNNNNNNNNNNNNNNNIEN). The span at 56 to 65 (SIDKNNKEDN) shows a compositional bias: basic and acidic residues. Over residues 72-86 (SHRKHRTRLKSKKGN) the composition is skewed to basic residues. A compositionally biased stretch (polar residues) spans 242–252 (TNSSILKSSEQ). The span at 280–292 (SSSSDEGSDNSKS) shows a compositional bias: low complexity. Residues 293-304 (QHSSVNTPTLSR) are compositionally biased toward polar residues. The segment covering 313–335 (SQQSQKQSQQQSQQPQQQNKTKQ) has biased composition (low complexity). Positions 416–425 (QHHRHYHHHI) are enriched in basic residues. Residues 469–492 (NINIQAPSTPVQSRNYPLFTTQSP) show a composition bias toward polar residues. A compositionally biased stretch (gly residues) spans 551–571 (GSGGGGSGGGGGGGGGGGGIG). Residues 574-598 (SSFLDDNNNLNNGENFKNSNSYNNN) are compositionally biased toward low complexity. Helical transmembrane passes span 660–680 (AYILNFLNLVLFVVYLLSTIL), 684–704 (EWFIFAPGILLSVIYFFLGKI), 708–728 (MYLIAFLTISTAVAINITSII), 747–767 (LVMIMVPLLFPSIVYSIVILI), and 795–815 (FGELLRSIIIVFVILMFYTIL). In terms of domain architecture, Histidine kinase spans 967-1188 (TVSHELRTPI…TFSFTIPCGI (222 aa)). His970 carries the post-translational modification Phosphohistidine; by autocatalysis. Disordered regions lie at residues 1359 to 1415 (ASKD…HQLI), 1521 to 1563 (GIAL…TTQS), 1617 to 1709 (NNNF…SSHS), and 1755 to 1832 (QKPQ…TAAA). A compositionally biased stretch (gly residues) spans 1373-1398 (GDGGRSLSGGGGGVGSNGNGNGGGGL). 2 stretches are compositionally biased toward low complexity: residues 1399–1410 (DSNISPSELSSS) and 1527–1549 (SSSKSPSIPSSSSASASALSPNS). Composition is skewed to polar residues over residues 1554–1563 (ELGNGKTTQS) and 1626–1665 (KPSTPTFLSNQPSPATSNSPQLLQSPTTSTTGSINLSPHR). Low complexity-rich tracts occupy residues 1755–1774 (QKPQQQQQKPTTTTTTTSTQ) and 1781–1821 (KTTT…TTTT). In terms of domain architecture, Response regulatory spans 1840 to 1967 (KILLVEDNFV…DILIQMIKKH (128 aa)). Asp1889 carries the 4-aspartylphosphate modification.

It is found in the membrane. The enzyme catalyses ATP + protein L-histidine = ADP + protein N-phospho-L-histidine.. Acts in the cytokinin signal transduction pathway that regulates spore germination. Required for the maintenance of spore dormancy. Does not appear to act as a cytokinin receptor. Probably undergoes ATP-dependent autophosphorylation at a conserved histidine residue in the kinase core, which is followed by transfer of the phosphoryl group to a conserved aspartate residue in the receiver domain. In Dictyostelium discoideum (Social amoeba), this protein is Hybrid signal transduction histidine kinase B (dhkB).